The primary structure comprises 539 residues: CTP synthase (539 aa).

The tract at residues 1 to 268 is amidoligase domain; sequence MADTKYIFVT…DETVLRKVGL (268 aa). Residue S15 coordinates CTP. S15 lines the UTP pocket. 16–21 is a binding site for ATP; it reads SLGKGI. Y56 provides a ligand contact to L-glutamine. D73 serves as a coordination point for ATP. Mg(2+) contacts are provided by D73 and E143. CTP contacts are provided by residues 150 to 152, 189 to 194, and K225; these read DIE and KTKPTQ. UTP-binding positions include 189–194 and K225; that span reads KTKPTQ. One can recognise a Glutamine amidotransferase type-1 domain in the interval 294 to 536; that stretch reads TIALVGKYVE…IREAIKTRKK (243 aa). Residue G356 coordinates L-glutamine. C383 functions as the Nucleophile; for glutamine hydrolysis in the catalytic mechanism. L-glutamine is bound by residues 384–387, E407, and R464; that span reads LGMQ. Residues H509 and E511 contribute to the active site.

It belongs to the CTP synthase family. As to quaternary structure, homotetramer.

It catalyses the reaction UTP + L-glutamine + ATP + H2O = CTP + L-glutamate + ADP + phosphate + 2 H(+). The catalysed reaction is L-glutamine + H2O = L-glutamate + NH4(+). It carries out the reaction UTP + NH4(+) + ATP = CTP + ADP + phosphate + 2 H(+). It functions in the pathway pyrimidine metabolism; CTP biosynthesis via de novo pathway; CTP from UDP: step 2/2. Its activity is regulated as follows. Allosterically activated by GTP, when glutamine is the substrate; GTP has no effect on the reaction when ammonia is the substrate. The allosteric effector GTP functions by stabilizing the protein conformation that binds the tetrahedral intermediate(s) formed during glutamine hydrolysis. Inhibited by the product CTP, via allosteric rather than competitive inhibition. In terms of biological role, catalyzes the ATP-dependent amination of UTP to CTP with either L-glutamine or ammonia as the source of nitrogen. Regulates intracellular CTP levels through interactions with the four ribonucleotide triphosphates. In Porphyromonas gingivalis (strain ATCC BAA-308 / W83), this protein is CTP synthase.